Consider the following 446-residue polypeptide: Methionine aminopeptidase 2-1 (446 aa).

The tract at residues 1 to 88 (MAAQVTPELA…PPRVILSSIF (88 aa)) is disordered. Positions 32–44 (ENEDVESDDDNEG) are enriched in acidic residues. Basic residues predominate over residues 57–72 (AKKKKKKKPKKKKKGG). Substrate is bound at residue H196. Residues D216, D227, and H296 each coordinate a divalent metal cation. H304 provides a ligand contact to substrate. Positions 332 and 427 each coordinate a divalent metal cation.

The protein belongs to the peptidase M24A family. Methionine aminopeptidase eukaryotic type 2 subfamily. Co(2+) serves as cofactor. Zn(2+) is required as a cofactor. Requires Mn(2+) as cofactor. The cofactor is Fe(2+).

The protein localises to the cytoplasm. It carries out the reaction Release of N-terminal amino acids, preferentially methionine, from peptides and arylamides.. Cotranslationally removes the N-terminal methionine from nascent proteins. The N-terminal methionine is often cleaved when the second residue in the primary sequence is small and uncharged (Met-Ala-, Cys, Gly, Pro, Ser, Thr, or Val). The protein is Methionine aminopeptidase 2-1 of Blastomyces gilchristii (strain SLH14081) (Blastomyces dermatitidis).